A 109-amino-acid polypeptide reads, in one-letter code: Nucleoid-associated protein Psyc_0793 (109 aa).

It belongs to the YbaB/EbfC family. In terms of assembly, homodimer.

The protein resides in the cytoplasm. The protein localises to the nucleoid. Its function is as follows. Binds to DNA and alters its conformation. May be involved in regulation of gene expression, nucleoid organization and DNA protection. The sequence is that of Nucleoid-associated protein Psyc_0793 from Psychrobacter arcticus (strain DSM 17307 / VKM B-2377 / 273-4).